Here is a 309-residue protein sequence, read N- to C-terminus: Pantoate--beta-alanine ligase (309 aa).

The protein belongs to the pantothenate synthetase family.

The protein resides in the cytoplasm. It localises to the nucleus. It carries out the reaction (R)-pantoate + beta-alanine + ATP = (R)-pantothenate + AMP + diphosphate + H(+). It participates in cofactor biosynthesis; (R)-pantothenate biosynthesis; (R)-pantothenate from (R)-pantoate and beta-alanine: step 1/1. Functionally, required for pantothenic acid biosynthesis. This Saccharomyces cerevisiae (strain ATCC 204508 / S288c) (Baker's yeast) protein is Pantoate--beta-alanine ligase (PAN6).